The following is a 396-amino-acid chain: DNA polymerase IV (396 aa).

Residues 5–192 (IFHVDVNSAF…LPVGELFMVG (188 aa)) enclose the UmuC domain. Mg(2+) is bound by residues aspartate 9 and aspartate 111. Glutamate 112 is a catalytic residue.

The protein belongs to the DNA polymerase type-Y family. In terms of assembly, monomer. Requires Mg(2+) as cofactor.

The protein localises to the cytoplasm. It catalyses the reaction DNA(n) + a 2'-deoxyribonucleoside 5'-triphosphate = DNA(n+1) + diphosphate. Functionally, poorly processive, error-prone DNA polymerase involved in untargeted mutagenesis. Copies undamaged DNA at stalled replication forks, which arise in vivo from mismatched or misaligned primer ends. These misaligned primers can be extended by PolIV. Exhibits no 3'-5' exonuclease (proofreading) activity. May be involved in translesional synthesis, in conjunction with the beta clamp from PolIII. This is DNA polymerase IV from Clostridium acetobutylicum (strain ATCC 824 / DSM 792 / JCM 1419 / IAM 19013 / LMG 5710 / NBRC 13948 / NRRL B-527 / VKM B-1787 / 2291 / W).